We begin with the raw amino-acid sequence, 186 residues long: Tetratricopeptide repeat protein 36 (186 aa).

3 TPR repeats span residues 48–81 (SKAL…LPDR), 83–115 (SAYN…SGGR), and 120–153 (RQSF…GSPF).

The protein belongs to the TTC36 family.

The sequence is that of Tetratricopeptide repeat protein 36 (Ttc36) from Mus musculus (Mouse).